We begin with the raw amino-acid sequence, 125 residues long: MIQAFLVALGGAIGSVLRYYVGQWALRLMGPAFPWGTLAVNVVGCFVIGVFAELIARRFNASMELRLLLITGFLGGFTTFSAFSLDAISLFERGEAVAGGIYIAASVGLSMAAVISGLAVMRALA.

4 helical membrane-spanning segments follow: residues 1-21 (MIQAFLVALGGAIGSVLRYYV), 32-52 (AFPWGTLAVNVVGCFVIGVFA), 68-88 (LLITGFLGGFTTFSAFSLDAI), and 101-121 (IYIAASVGLSMAAVISGLAVM). Gly75 and Thr78 together coordinate Na(+).

It belongs to the fluoride channel Fluc/FEX (TC 1.A.43) family.

The protein resides in the cell inner membrane. The enzyme catalyses fluoride(in) = fluoride(out). Its activity is regulated as follows. Na(+) is not transported, but it plays an essential structural role and its presence is essential for fluoride channel function. Fluoride-specific ion channel. Important for reducing fluoride concentration in the cell, thus reducing its toxicity. The polypeptide is Fluoride-specific ion channel FluC (Rhizobium etli (strain CIAT 652)).